The sequence spans 450 residues: Bifunctional protein GlmU (450 aa).

Positions 1–228 (MKTALVILAA…ESETLGINSR (228 aa)) are pyrophosphorylase. UDP-N-acetyl-alpha-D-glucosamine contacts are provided by residues 8–11 (LAAG), lysine 22, glutamine 75, and 80–81 (GT). Position 105 (aspartate 105) interacts with Mg(2+). Glycine 140, glutamate 154, asparagine 169, and asparagine 226 together coordinate UDP-N-acetyl-alpha-D-glucosamine. Asparagine 226 is a Mg(2+) binding site. A linker region spans residues 229–249 (TELSAAEAAFQERARTNAFEN). The tract at residues 250-450 (GVTLPAPGTV…AKKAKQQRGS (201 aa)) is N-acetyltransferase. UDP-N-acetyl-alpha-D-glucosamine-binding residues include arginine 315 and lysine 333. The active-site Proton acceptor is histidine 345. Residues tyrosine 348 and asparagine 359 each coordinate UDP-N-acetyl-alpha-D-glucosamine. Acetyl-CoA-binding positions include alanine 362, 368 to 369 (NY), serine 387, serine 405, and arginine 422.

It in the N-terminal section; belongs to the N-acetylglucosamine-1-phosphate uridyltransferase family. The protein in the C-terminal section; belongs to the transferase hexapeptide repeat family. In terms of assembly, homotrimer. It depends on Mg(2+) as a cofactor.

It is found in the cytoplasm. The enzyme catalyses alpha-D-glucosamine 1-phosphate + acetyl-CoA = N-acetyl-alpha-D-glucosamine 1-phosphate + CoA + H(+). It catalyses the reaction N-acetyl-alpha-D-glucosamine 1-phosphate + UTP + H(+) = UDP-N-acetyl-alpha-D-glucosamine + diphosphate. The protein operates within nucleotide-sugar biosynthesis; UDP-N-acetyl-alpha-D-glucosamine biosynthesis; N-acetyl-alpha-D-glucosamine 1-phosphate from alpha-D-glucosamine 6-phosphate (route II): step 2/2. It participates in nucleotide-sugar biosynthesis; UDP-N-acetyl-alpha-D-glucosamine biosynthesis; UDP-N-acetyl-alpha-D-glucosamine from N-acetyl-alpha-D-glucosamine 1-phosphate: step 1/1. Its pathway is bacterial outer membrane biogenesis; LPS lipid A biosynthesis. Functionally, catalyzes the last two sequential reactions in the de novo biosynthetic pathway for UDP-N-acetylglucosamine (UDP-GlcNAc). The C-terminal domain catalyzes the transfer of acetyl group from acetyl coenzyme A to glucosamine-1-phosphate (GlcN-1-P) to produce N-acetylglucosamine-1-phosphate (GlcNAc-1-P), which is converted into UDP-GlcNAc by the transfer of uridine 5-monophosphate (from uridine 5-triphosphate), a reaction catalyzed by the N-terminal domain. This Roseobacter denitrificans (strain ATCC 33942 / OCh 114) (Erythrobacter sp. (strain OCh 114)) protein is Bifunctional protein GlmU.